Consider the following 279-residue polypeptide: Large ribosomal subunit protein uL2 (279 aa).

Disordered stretches follow at residues 30–59 (EKSL…GGHK) and 225–279 (VMNP…KNKR). A compositionally biased stretch (basic residues) spans 50 to 59 (TTRHKGGGHK). The segment covering 253-268 (PEGRTRRPNKESDKLI) has biased composition (basic and acidic residues). Basic residues predominate over residues 269 to 279 (VRRRRTGKNKR).

This sequence belongs to the universal ribosomal protein uL2 family. Part of the 50S ribosomal subunit. Forms a bridge to the 30S subunit in the 70S ribosome.

Functionally, one of the primary rRNA binding proteins. Required for association of the 30S and 50S subunits to form the 70S ribosome, for tRNA binding and peptide bond formation. It has been suggested to have peptidyltransferase activity; this is somewhat controversial. Makes several contacts with the 16S rRNA in the 70S ribosome. The protein is Large ribosomal subunit protein uL2 of Kocuria rhizophila (strain ATCC 9341 / DSM 348 / NBRC 103217 / DC2201).